The chain runs to 235 residues: Pyridoxine 5'-phosphate synthase (235 aa).

N6 lines the 3-amino-2-oxopropyl phosphate pocket. Residue 8-9 participates in 1-deoxy-D-xylulose 5-phosphate binding; the sequence is DH. R17 is a 3-amino-2-oxopropyl phosphate binding site. H42 functions as the Proton acceptor in the catalytic mechanism. The 1-deoxy-D-xylulose 5-phosphate site is built by R44 and H49. Catalysis depends on E69, which acts as the Proton acceptor. T99 contributes to the 1-deoxy-D-xylulose 5-phosphate binding site. Residue H188 is the Proton donor of the active site. Residues G189 and 210-211 each bind 3-amino-2-oxopropyl phosphate; that span reads GH.

It belongs to the PNP synthase family. In terms of assembly, homooctamer; tetramer of dimers.

The protein localises to the cytoplasm. It carries out the reaction 3-amino-2-oxopropyl phosphate + 1-deoxy-D-xylulose 5-phosphate = pyridoxine 5'-phosphate + phosphate + 2 H2O + H(+). The protein operates within cofactor biosynthesis; pyridoxine 5'-phosphate biosynthesis; pyridoxine 5'-phosphate from D-erythrose 4-phosphate: step 5/5. Functionally, catalyzes the complicated ring closure reaction between the two acyclic compounds 1-deoxy-D-xylulose-5-phosphate (DXP) and 3-amino-2-oxopropyl phosphate (1-amino-acetone-3-phosphate or AAP) to form pyridoxine 5'-phosphate (PNP) and inorganic phosphate. This is Pyridoxine 5'-phosphate synthase from Wolbachia pipientis subsp. Culex pipiens (strain wPip).